The sequence spans 178 residues: Ribulose bisphosphate carboxylase small subunit, chloroplastic 2 (178 aa).

A chloroplast-targeting transit peptide spans 1-54; sequence MASISSTVATVSRAAPAQANMVAPFTGLKSNVAFPATKKANDFSTLPSNGGRVQ.

Belongs to the RuBisCO small chain family. As to quaternary structure, heterohexadecamer of 8 large and 8 small subunits.

The protein resides in the plastid. Its subcellular location is the chloroplast. In terms of biological role, ruBisCO catalyzes two reactions: the carboxylation of D-ribulose 1,5-bisphosphate, the primary event in carbon dioxide fixation, as well as the oxidative fragmentation of the pentose substrate. Both reactions occur simultaneously and in competition at the same active site. Although the small subunit is not catalytic it is essential for maximal activity. The sequence is that of Ribulose bisphosphate carboxylase small subunit, chloroplastic 2 from Flaveria pringlei.